Reading from the N-terminus, the 302-residue chain is UDP-N-acetylenolpyruvoylglucosamine reductase (302 aa).

The region spanning 27–192 (KTGGPADYVA…VSVTFGLKPG (166 aa)) is the FAD-binding PCMH-type domain. Residue Arg-171 is part of the active site. The Proton donor role is filled by Ser-221. The active site involves Glu-291.

It belongs to the MurB family. The cofactor is FAD.

The protein resides in the cytoplasm. The enzyme catalyses UDP-N-acetyl-alpha-D-muramate + NADP(+) = UDP-N-acetyl-3-O-(1-carboxyvinyl)-alpha-D-glucosamine + NADPH + H(+). Its pathway is cell wall biogenesis; peptidoglycan biosynthesis. Functionally, cell wall formation. The polypeptide is UDP-N-acetylenolpyruvoylglucosamine reductase (Lactiplantibacillus plantarum (strain ATCC BAA-793 / NCIMB 8826 / WCFS1) (Lactobacillus plantarum)).